The primary structure comprises 137 residues: MANQPSAEELKKKLSEMQFYVTQDRGTEPPFTGRLLHNKRDGVYHCLVCDTPLFHSHTKYDSGCGWPSFYQPVSEEAIRYIDDFSHGMQRVEIRCGNCDAHLGHVFPDGPQPTGERYCVNSASLAFSDEKNGDQLKG.

Residues 7–129 (AEELKKKLSE…NSASLAFSDE (123 aa)) form the MsrB domain. Positions 46, 49, 95, and 98 each coordinate Zn(2+). C118 serves as the catalytic Nucleophile.

Belongs to the MsrB Met sulfoxide reductase family. It depends on Zn(2+) as a cofactor.

It catalyses the reaction L-methionyl-[protein] + [thioredoxin]-disulfide + H2O = L-methionyl-(R)-S-oxide-[protein] + [thioredoxin]-dithiol. In Salmonella dublin (strain CT_02021853), this protein is Peptide methionine sulfoxide reductase MsrB.